Here is a 330-residue protein sequence, read N- to C-terminus: 4,5-dihydroxyphthalate decarboxylase (330 aa).

It to P.putida DHP decarboxylase.

It carries out the reaction 4,5-dihydroxyphthalate + H(+) = 3,4-dihydroxybenzoate + CO2. The protein operates within xenobiotic degradation; phthalate degradation; 3,4-dihydroxybenzoate from phthalate: step 3/3. The polypeptide is 4,5-dihydroxyphthalate decarboxylase (phtD) (Comamonas testosteroni (Pseudomonas testosteroni)).